We begin with the raw amino-acid sequence, 74 residues long: ATP synthase subunit 9, mitochondrial (74 aa).

2 helical membrane passes run 8–28 (IGAGLATIGVSGAGVGIGLIF) and 50–70 (ILGFALTEATGLFCLMLAFLI).

This sequence belongs to the ATPase C chain family. As to quaternary structure, F-type ATPases have 2 components, CF(1) - the catalytic core - and CF(0) - the membrane proton channel. CF(1) has five subunits: alpha(3), beta(3), gamma(1), delta(1), epsilon(1). CF(0) has three main subunits: a, b and c.

The protein resides in the mitochondrion membrane. Its function is as follows. Mitochondrial membrane ATP synthase (F(1)F(0) ATP synthase or Complex V) produces ATP from ADP in the presence of a proton gradient across the membrane which is generated by electron transport complexes of the respiratory chain. F-type ATPases consist of two structural domains, F(1) - containing the extramembraneous catalytic core and F(0) - containing the membrane proton channel, linked together by a central stalk and a peripheral stalk. During catalysis, ATP synthesis in the catalytic domain of F(1) is coupled via a rotary mechanism of the central stalk subunits to proton translocation. Part of the complex F(0) domain. A homomeric c-ring of probably 10 subunits is part of the complex rotary element. In Schizosaccharomyces pombe (strain 972 / ATCC 24843) (Fission yeast), this protein is ATP synthase subunit 9, mitochondrial (atp9).